Here is a 74-residue protein sequence, read N- to C-terminus: Conotoxin SIIID (74 aa).

Residues 1–20 form the signal peptide; that stretch reads MMSKLGVLLTVCLLLFPLTA. The propeptide occupies 21–53; it reads LPLDGDQPADQLEDRMQDDISSEQYPSFVRRQK. 3 disulfides stabilise this stretch: cysteine 54–cysteine 71, cysteine 55–cysteine 73, and cysteine 61–cysteine 74.

It belongs to the conotoxin M superfamily. Three disulfide isomers have been synthesized and tested. SIIID with the disulfide pairing 1-4;2-5;3-6 is the most active. In terms of tissue distribution, expressed by the venom duct.

It localises to the secreted. The short synthetic peptide SIIID (range 54-74, with disulfide pairing 1-4, 2-5 and 3-6) reversibly inhibits human alpha-7/CHRNA7 acetylcholine receptor (IC(50)=880 nM). Shows a paralytic effect in fish. In Conus striatus (Striated cone), this protein is Conotoxin SIIID.